The chain runs to 287 residues: Uroplakin-3a (287 aa).

The N-terminal stretch at 1–18 is a signal peptide; that stretch reads MLLLWALLALGCLRCGWT. At 19–207 the chain is on the lumenal side; sequence VNLQPQLASV…DTWPGRRSGG (189 aa). 3 N-linked (GlcNAc...) asparagine glycosylation sites follow: asparagine 74, asparagine 139, and asparagine 170. The chain crosses the membrane as a helical span at residues 208 to 235; that stretch reads MIVITSILGSLPFFLLVGFAGAIILSFV. Topologically, residues 236 to 287 are cytoplasmic; that stretch reads DMGSSDGEMTHDSQITQEAVPKTLGTSEPSYSSVNRGPPLDRAEVFSSKLQD. The segment at 243-287 is disordered; sequence EMTHDSQITQEAVPKTLGTSEPSYSSVNRGPPLDRAEVFSSKLQD. Over residues 259 to 270 the composition is skewed to polar residues; it reads LGTSEPSYSSVN.

Belongs to the uroplakin-3 family. In terms of assembly, heterodimer with uroplakin-1B (UPK1B).

The protein localises to the endoplasmic reticulum membrane. In terms of biological role, component of the asymmetric unit membrane (AUM); a highly specialized biomembrane elaborated by terminally differentiated urothelial cells. May play an important role in AUM-cytoskeleton interaction in terminally differentiated urothelial cells. It also contributes to the formation of urothelial glycocalyx which may play an important role in preventing bacterial adherence. The polypeptide is Uroplakin-3a (Upk3a) (Mus musculus (Mouse)).